The following is an 87-amino-acid chain: Small ribosomal subunit protein bS16 (87 aa).

It belongs to the bacterial ribosomal protein bS16 family.

The chain is Small ribosomal subunit protein bS16 from Ehrlichia chaffeensis (strain ATCC CRL-10679 / Arkansas).